The sequence spans 467 residues: Cysteine--tRNA ligase (467 aa).

Cysteine 28 contributes to the Zn(2+) binding site. Positions 30 to 40 (MTVYDYCHLGH) match the 'HIGH' region motif. Residues cysteine 209, histidine 234, and glutamate 238 each contribute to the Zn(2+) site. Positions 266-270 (KMSKS) match the 'KMSKS' region motif. Lysine 269 is a binding site for ATP.

It belongs to the class-I aminoacyl-tRNA synthetase family. Monomer. Zn(2+) is required as a cofactor.

Its subcellular location is the cytoplasm. The enzyme catalyses tRNA(Cys) + L-cysteine + ATP = L-cysteinyl-tRNA(Cys) + AMP + diphosphate. In Hahella chejuensis (strain KCTC 2396), this protein is Cysteine--tRNA ligase.